The primary structure comprises 340 residues: MDGVRNLTVSCASSNTCNDTIDDFRNQVYSTLYSMITVVGFFGNGFVLYVLIKTYHEKSAYQVYMINLAVADLLCVCTLPLRVVYYVHKGIWLFGDFLCRLSTYALYVNLYCSIFFMTAMSFFRCIAIVFPVQNINLITHKKAKIVCIAIWIFVILTSSPFLMSTSYKDEKNNTKCFEPPQXNQAKYHVLVLHYVSLFVGFIIPFVIIIVCYTMIILTLLKNSMKKNISSRKKAIGMIIVVTAAFLISFMPYHIQRTIHLHFLHNDTKHCDSVLRMQKSVXITLSLAASNCCFDPLLYFFSGGNFREGLSTFRKHSLSTMTYVPKKKTSLPEKAQEIYKE.

At 1 to 31 the chain is on the extracellular side; sequence MDGVRNLTVSCASSNTCNDTIDDFRNQVYST. N-linked (GlcNAc...) asparagine glycans are attached at residues Asn6 and Asn18. A helical transmembrane segment spans residues 32–52; sequence LYSMITVVGFFGNGFVLYVLI. The Cytoplasmic segment spans residues 53-60; that stretch reads KTYHEKSA. The helical transmembrane segment at 61 to 81 threads the bilayer; the sequence is YQVYMINLAVADLLCVCTLPL. Over 82 to 109 the chain is Extracellular; the sequence is RVVYYVHKGIWLFGDFLCRLSTYALYVN. Cys99 and Cys176 are disulfide-bonded. A helical membrane pass occupies residues 110–130; that stretch reads LYCSIFFMTAMSFFRCIAIVF. Topologically, residues 131–144 are cytoplasmic; that stretch reads PVQNINLITHKKAK. A helical membrane pass occupies residues 145–165; it reads IVCIAIWIFVILTSSPFLMST. Residues 166–196 lie on the Extracellular side of the membrane; sequence SYKDEKNNTKCFEPPQXNQAKYHVLVLHYVS. Residue Asn172 is glycosylated (N-linked (GlcNAc...) asparagine). The chain crosses the membrane as a helical span at residues 197 to 217; that stretch reads LFVGFIIPFVIIIVCYTMIIL. Topologically, residues 218 to 233 are cytoplasmic; sequence TLLKNSMKKNISSRKK. Residues 234-254 form a helical membrane-spanning segment; it reads AIGMIIVVTAAFLISFMPYHI. Over 255–279 the chain is Extracellular; it reads QRTIHLHFLHNDTKHCDSVLRMQKS. The N-linked (GlcNAc...) asparagine glycan is linked to Asn265. A helical membrane pass occupies residues 280 to 300; it reads VXITLSLAASNCCFDPLLYFF. At 301-340 the chain is on the cytoplasmic side; that stretch reads SGGNFREGLSTFRKHSLSTMTYVPKKKTSLPEKAQEIYKE.

The protein belongs to the G-protein coupled receptor 1 family.

Its subcellular location is the cell membrane. Functionally, receptor for cysteinyl leukotrienes mediating constriction of the microvascular smooth muscle during an inflammatory response. This response is mediated via a G-protein that activates a phosphatidylinositol-calcium second messenger system. The chain is Cysteinyl leukotriene receptor 1 (CYSLTR1) from Sus scrofa (Pig).